The chain runs to 284 residues: Nucleotide-binding protein PP_0949 (284 aa).

8 to 15 (GRSGSGKS) is a binding site for ATP. Position 60–63 (60–63 (DARN)) interacts with GTP.

It belongs to the RapZ-like family.

Functionally, displays ATPase and GTPase activities. This is Nucleotide-binding protein PP_0949 from Pseudomonas putida (strain ATCC 47054 / DSM 6125 / CFBP 8728 / NCIMB 11950 / KT2440).